Reading from the N-terminus, the 371-residue chain is Capsular polysaccharide phosphotransferase cps12A (371 aa).

The protein belongs to the stealth family.

Its function is as follows. Part of a capsular polysaccharide synthesis locus. This is Capsular polysaccharide phosphotransferase cps12A (cps12A) from Actinobacillus pleuropneumoniae (Haemophilus pleuropneumoniae).